We begin with the raw amino-acid sequence, 666 residues long: tRNA 5-methylaminomethyl-2-thiouridine biosynthesis bifunctional protein MnmC (666 aa).

The tract at residues 1–245 (MKQYAIQPAT…KREMLCGVME (245 aa)) is tRNA (mnm(5)s(2)U34)-methyltransferase. The segment at 270-666 (IGGGIASALL…RKLLKGKAVK (397 aa)) is FAD-dependent cmnm(5)s(2)U34 oxidoreductase.

This sequence in the N-terminal section; belongs to the methyltransferase superfamily. tRNA (mnm(5)s(2)U34)-methyltransferase family. In the C-terminal section; belongs to the DAO family. The cofactor is FAD.

It localises to the cytoplasm. The catalysed reaction is 5-aminomethyl-2-thiouridine(34) in tRNA + S-adenosyl-L-methionine = 5-methylaminomethyl-2-thiouridine(34) in tRNA + S-adenosyl-L-homocysteine + H(+). Its function is as follows. Catalyzes the last two steps in the biosynthesis of 5-methylaminomethyl-2-thiouridine (mnm(5)s(2)U) at the wobble position (U34) in tRNA. Catalyzes the FAD-dependent demodification of cmnm(5)s(2)U34 to nm(5)s(2)U34, followed by the transfer of a methyl group from S-adenosyl-L-methionine to nm(5)s(2)U34, to form mnm(5)s(2)U34. The chain is tRNA 5-methylaminomethyl-2-thiouridine biosynthesis bifunctional protein MnmC from Salmonella typhi.